We begin with the raw amino-acid sequence, 268 residues long: Small ribosomal subunit protein uS2 (268 aa).

Belongs to the universal ribosomal protein uS2 family.

This Coprothermobacter proteolyticus (strain ATCC 35245 / DSM 5265 / OCM 4 / BT) protein is Small ribosomal subunit protein uS2.